Consider the following 487-residue polypeptide: Capsid protein (487 aa).

The disordered stretch occupies residues 1–66; sequence MNQDTPLANL…VPPAGPSRSA (66 aa). Over residues 30-41 the composition is skewed to low complexity; that stretch reads NVAPPAQGAVQQ.

Its subcellular location is the virion. Functionally, the capsid protein self-assembles to form an icosahedral capsid with a T=2 symmetry made of 120 subunits. The sequence is that of Capsid protein from Trifolium repens (Creeping white clover).